The following is a 200-amino-acid chain: Outer-membrane lipoprotein carrier protein (200 aa).

The signal sequence occupies residues 1 to 18 (MKAVVFAMVMAVSFNVFA).

Belongs to the LolA family. In terms of assembly, monomer.

It localises to the periplasm. In terms of biological role, participates in the translocation of lipoproteins from the inner membrane to the outer membrane. Only forms a complex with a lipoprotein if the residue after the N-terminal Cys is not an aspartate (The Asp acts as a targeting signal to indicate that the lipoprotein should stay in the inner membrane). This Idiomarina loihiensis (strain ATCC BAA-735 / DSM 15497 / L2-TR) protein is Outer-membrane lipoprotein carrier protein.